An 838-amino-acid polypeptide reads, in one-letter code: E3 ubiquitin-protein ligase RNF19A (838 aa).

Residues 41-61 (DRDLQSSASSVSLPSVKKAPK) are disordered. Positions 46–57 (SSASSVSLPSVK) are enriched in low complexity. Positions 128 to 351 (DFIECPLCLL…LSPSGCTFWG (224 aa)) are TRIAD supradomain. Zn(2+)-binding residues include C132, C135, C150, H152, C155, C158, C176, C179, C219, C224, C241, C246, C251, C254, H259, C264, C301, and C304. An RING-type 1 zinc finger spans residues 132-179 (CPLCLLRHSKDRFPDIMTCHHRSCVDCLRQYLRIEISESRVNISCPEC). Residues 199–264 (EKYEEFMLRR…KQIWHPNQTC (66 aa)) form an IBR-type zinc finger. Residues 301–332 (CPRCAAYIIKMNDGSCNHMTCAVCGCEFCWLC) form an RING-type 2; atypical zinc finger. C316 is a catalytic residue. Zn(2+)-binding residues include C321, C324, C329, C332, H340, and C347. Helical transmembrane passes span 368–388 (LVGAPVGIALIAGIAIPAMII) and 424–444 (VIVSPVVAAVTVGIGVPIMLA). Disordered stretches follow at residues 622–685 (SKPS…GNMK) and 700–721 (QQSTNSSEFEAPSLSDSMPSVA). Over residues 630 to 662 (NSGSSSVDDGSATRSHAGGSSSGLPEGKSSATK) the composition is skewed to polar residues. Phosphoserine is present on S631. The tract at residues 660 to 838 (ATKWSKEATA…ELKVAIQTEI (179 aa)) is interaction with CASR. Positions 671–683 (KKSKSGKLRKKGN) are enriched in basic residues. A compositionally biased stretch (polar residues) spans 700–717 (QQSTNSSEFEAPSLSDSM).

Belongs to the RBR family. RNF19 subfamily. In terms of assembly, interacts with UBE2L3 and UBE2L6. Interacts with transcription factor Sp1. Interacts with VCP, CASR, SNCAIP and with some SOD1 variants which cause amyotrophic lateral sclerosis, but not with wild-type SOD1. In terms of tissue distribution, widely expressed, with highest levels in heart. Ubiquitously expressed in the central nervous system.

It is found in the membrane. Its subcellular location is the cytoplasm. It localises to the cytoskeleton. The protein resides in the microtubule organizing center. The protein localises to the centrosome. The catalysed reaction is [E2 ubiquitin-conjugating enzyme]-S-ubiquitinyl-L-cysteine + [acceptor protein]-L-lysine = [E2 ubiquitin-conjugating enzyme]-L-cysteine + [acceptor protein]-N(6)-ubiquitinyl-L-lysine.. The protein operates within protein modification; protein ubiquitination. In terms of biological role, E3 ubiquitin-protein ligase which accepts ubiquitin from E2 ubiquitin-conjugating enzymes UBE2L3 and UBE2L6 in the form of a thioester and then directly transfers the ubiquitin to targeted substrates, such as SNCAIP or CASR. Specifically ubiquitinates pathogenic SOD1 variants, which leads to their proteasomal degradation and to neuronal protection. The chain is E3 ubiquitin-protein ligase RNF19A (RNF19A) from Homo sapiens (Human).